Reading from the N-terminus, the 353-residue chain is Pleckstrin-2 (353 aa).

Met-1 bears the N-acetylmethionine mark. Residues 4–104 (GVLKEGFLVK…WAFEITGAIH (101 aa)) form the PH 1 domain. The residue at position 120 (Ser-120) is a Phosphoserine. One can recognise a DEP domain in the interval 139-225 (SNTGIRSSPN…DSTALYTFAE (87 aa)). The 107-residue stretch at 247–353 (TVVKQGYLAK…EWIEAIKKLT (107 aa)) folds into the PH 2 domain.

The protein resides in the cell projection. It localises to the lamellipodium membrane. The protein localises to the cytoplasm. It is found in the cytoskeleton. Its function is as follows. May help orchestrate cytoskeletal arrangement. Contribute to lamellipodia formation. This chain is Pleckstrin-2 (PLEK2), found in Homo sapiens (Human).